Consider the following 113-residue polypeptide: Hydrogenase maturation factor HypA (113 aa).

Histidine 2 contributes to the Ni(2+) binding site. Cysteine 73, cysteine 76, cysteine 89, and cysteine 92 together coordinate Zn(2+).

The protein belongs to the HypA/HybF family.

In terms of biological role, involved in the maturation of [NiFe] hydrogenases. Required for nickel insertion into the metal center of the hydrogenase. The protein is Hydrogenase maturation factor HypA of Beijerinckia indica subsp. indica (strain ATCC 9039 / DSM 1715 / NCIMB 8712).